We begin with the raw amino-acid sequence, 363 residues long: MGSRILVINPGSTSTKVAIFNEGKISFDAEVSHPRERIDKFSTVMEQKEFRSAAVMDLIKDELAKGTPDMVVGRGGLLKPIPGGPYSINDAMISDLESGRYGVHPCNLGAILAREFAEFWEVPSMIMDPVVTDEMDPVAKVTGLPEIKRRSVFHALSQRGVARSVAAEMGLEYEQAKFIVGHMGGGVSIGAHRYGKVVDVINALDGEGPFSPERSGTLPILPVLNLVESGQYTFDEMRKVVTSRSGVLGLLGTNDMREVQARMEEGDDEARLVLEALVYNASKYICSFIPALMKDDPQKRPIDAIILTGGVARSKLLVKAVEDVVGFIAPVKVVTGLEEMEVMGRGGLAVLRGEMQPQEYHSD.

Belongs to the acetokinase family.

It localises to the cytoplasm. The catalysed reaction is butanoate + ATP = butanoyl phosphate + ADP. In Maridesulfovibrio salexigens (strain ATCC 14822 / DSM 2638 / NCIMB 8403 / VKM B-1763) (Desulfovibrio salexigens), this protein is Probable butyrate kinase.